Here is a 256-residue protein sequence, read N- to C-terminus: Deoxyribose-phosphate aldolase (256 aa).

The Proton donor/acceptor role is filled by aspartate 102. Lysine 165 (schiff-base intermediate with acetaldehyde) is an active-site residue. The active-site Proton donor/acceptor is lysine 197.

It belongs to the DeoC/FbaB aldolase family. DeoC type 2 subfamily.

The protein resides in the cytoplasm. It catalyses the reaction 2-deoxy-D-ribose 5-phosphate = D-glyceraldehyde 3-phosphate + acetaldehyde. The protein operates within carbohydrate degradation; 2-deoxy-D-ribose 1-phosphate degradation; D-glyceraldehyde 3-phosphate and acetaldehyde from 2-deoxy-alpha-D-ribose 1-phosphate: step 2/2. Functionally, catalyzes a reversible aldol reaction between acetaldehyde and D-glyceraldehyde 3-phosphate to generate 2-deoxy-D-ribose 5-phosphate. The polypeptide is Deoxyribose-phosphate aldolase (Shewanella sp. (strain W3-18-1)).